The sequence spans 419 residues: MQRLKQQQQQQQVMMQQALMQQQSLYHPGLLAPPQIEPIPSGNLPPGFDPSTCRSVYVGNIHIQVTEPLLQEVFAGTGPVESCKLIRKEKSSYGFVHYFDRRSAGLAILSLNGRHLFGQPIKVNWAYASGQREDTSSHFNIFVGDLSPEVTDAMLFTCFSVYPTCSDARVMWDQKTGRSRGFGFVSFRNQQDAQTAIDEITGKWLGSRQIRCNWATKGATSGEDKQSSDSKSVVELTSGVSEDGKDTTNGEAPENNAQYTTVYVGNLAPEVSQVDLHRHFHSLGAGVIEEVRVQRDKGFGFVRYSTHVEAALAIQMGNTHSYLSGRQMKCSWGSKPTPAGTASNPLPPPAPAPIPGFSASDLLAYERQLAMSKMAGMNPMMHHPQGQHAFKQAAMGATGSNQAIYDGGYQNAQQLMYYQ.

2 RRM domains span residues 54 to 128 (RSVY…WAYA) and 139 to 217 (FNIF…WATK). The segment at 217 to 257 (KGATSGEDKQSSDSKSVVELTSGVSEDGKDTTNGEAPENNA) is disordered. S241 carries the post-translational modification Phosphoserine. The region spanning 260 to 335 (TTVYVGNLAP…RQMKCSWGSK (76 aa)) is the RRM 3 domain.

Interacts with UBA1A and UBA2A.

The protein resides in the nucleus. Its function is as follows. Heterogeneous nuclear ribonucleoprotein (hnRNP)-like protein that acts as a component of the pre-mRNA processing machinery. Functions to facilitate the nuclear maturation of plant pre-mRNAs. The chain is Oligouridylate-binding protein 1B (UBP1B) from Arabidopsis thaliana (Mouse-ear cress).